Consider the following 434-residue polypeptide: Glycylpeptide N-tetradecanoyltransferase 1 (434 aa).

The segment at methionine 1 to leucine 24 is disordered. N-acetylalanine is present on alanine 2. Tetradecanoyl-CoA contacts are provided by residues histidine 48–tryptophan 51, leucine 184–valine 186, and serine 192–alanine 196. Residue leucine 434 is the Proton acceptor; via carboxylate of the active site.

Belongs to the NMT family. As to expression, expressed ubiquitously, with higher levels in young tissues (at protein level).

It localises to the cytoplasm. It catalyses the reaction N-terminal glycyl-[protein] + tetradecanoyl-CoA = N-tetradecanoylglycyl-[protein] + CoA + H(+). In terms of biological role, adds a myristoyl group to the N-terminal glycine residue of certain cellular proteins. Can also use decanoyl-CoA and lauroyl-CoA as substrates. This chain is Glycylpeptide N-tetradecanoyltransferase 1 (NMT1), found in Arabidopsis thaliana (Mouse-ear cress).